Here is a 170-residue protein sequence, read N- to C-terminus: Disulfide bond formation protein B (170 aa).

Over M1 to L14 the chain is Cytoplasmic. A helical membrane pass occupies residues L15 to Y31. Topologically, residues L32–Y49 are periplasmic. C41 and C44 form a disulfide bridge. A helical transmembrane segment spans residues F50–I64. Topologically, residues R65 to W71 are cytoplasmic. A helical transmembrane segment spans residues V72 to A89. Residues R90–G144 lie on the Periplasmic side of the membrane. A disulfide bridge links C102 with C130. The chain crosses the membrane as a helical span at residues W145–R163. The Cytoplasmic segment spans residues H164–G170.

It belongs to the DsbB family.

The protein resides in the cell inner membrane. Required for disulfide bond formation in some periplasmic proteins. Acts by oxidizing the DsbA protein. The sequence is that of Disulfide bond formation protein B from Burkholderia ambifaria (strain ATCC BAA-244 / DSM 16087 / CCUG 44356 / LMG 19182 / AMMD) (Burkholderia cepacia (strain AMMD)).